A 781-amino-acid polypeptide reads, in one-letter code: Pyrin (781 aa).

The Pyrin domain maps to 1-92 (MAKTPSDHLL…AEELHRAAIQ (92 aa)). Polar residues predominate over residues 93 to 111 (EYSTQENGTDDSAASSSLG). The disordered stretch occupies residues 93-226 (EYSTQENGTD…AGGAPGQKEC (134 aa)). Residues 113–126 (NKPRSLKTPDHPEG) are compositionally biased toward basic and acidic residues. Residues 153–163 (LSRKPLSKRRE) show a composition bias toward basic residues. Serine 242 carries the phosphoserine modification. The segment at 266–280 (KTAANLDSATEPRAR) is interaction with RELA. 2 disordered regions span residues 270–322 (NLDS…EGDP) and 336–373 (EAVSGHPQASGSRSPGCPRCQDSHERKSPGSLSPQPLP). The segment at 370–412 (QPLPQCKRHLKQVQLLFCEDHDEPICLICSLSQEHQGHRVRPI) adopts a B box-type zinc-finger fold. Residues 413–442 (EEVALEHKKKIQKQLEHLKKLRKSGEEQRS) are a coiled coil. Positions 420 to 437 (KKKIQKQLEHLKKLRKSG) match the Nuclear localization signal motif. Positions 420-582 (KKKIQKQLEH…YFSETLRSEM (163 aa)) are required for homotrimerization and induction of pyroptosomes. One can recognise a B30.2/SPRY domain in the interval 580-775 (SEMEMFNVPE…NTAPLTICPV (196 aa)).

In terms of assembly, homotrimer. Interacts (via the B box-type zinc finger) with PSTPIP1. Interacts (via the B30.2/SPRY domain) with several components of the inflammasome complex, including CASP1 p20 and p10 subunits, CASP5, PYCARD, NLRP1, NLRP2 and NLRP3, as well as with unprocessed IL1B; this interaction may lead to autophagic degradation of these proteins. Component of the AIM2 PANoptosome complex, a multiprotein complex that drives inflammatory cell death (PANoptosis). Interacts with NFKBIA and RELA. Interacts weakly with VASP and ACTR3. Interacts with active ULK1 (phosphorylated on 'Ser-317') and BECN1 simultaneously. Also interacts with ATG16L1 (via WD repeats), and with ATG8 family members, including GABARAP, GABARAPL1 and, to a lesser extent, GABARAPL2, MAP1LC3A/LC3A and MAP1LC3C/LC3C. Interacts with TRIM21. Interacts with YWHAB, YWHAE, YWHAG, YWHAH, YWHAQ and YWHAZ; the interaction is required for the down-regulation of pyrin pro-inflammatory activity. Cleaved by CASP1. The N-terminal cleavage product localizes to the nucleus as a filamentous network and to the cytoplasm, interacts more strongly with RELA and NFKBIA than the full-length protein, enhances the nuclear localization of RELA and induces NFKBIA proteolysis. The C-terminal cleavage product localizes to the cytoplasm. Post-translationally, phosphorylation at Ser-242 is required for the interaction with 14-3-3 proteins and down-regulation of pyrin pro-inflammatory activity. In terms of processing, degraded along with the delivery of its substrates to autolysosomal compartments (at protein level). As to expression, expressed in peripheral blood leukocytes, particularly in mature granulocytes and to a lesser extent in monocytes but not in lymphocytes. Detected in spleen, lung and muscle, probably as a result of leukocyte infiltration in these tissues. Not expressed in thymus, prostate, testis, ovary, small intestine, colon, heart, brain, placenta, liver, kidney, pancreas. Expression detected in several myeloid leukemic, colon cancer, and prostate cancer cell lines.

It is found in the cytoplasm. Its subcellular location is the cytoskeleton. It localises to the cell projection. The protein resides in the ruffle. The protein localises to the lamellipodium. It is found in the nucleus. Its subcellular location is the cytoplasmic vesicle. It localises to the autophagosome. In terms of biological role, involved in the regulation of innate immunity and the inflammatory response in response to IFNG/IFN-gamma. Organizes autophagic machinery by serving as a platform for the assembly of ULK1, Beclin 1/BECN1, ATG16L1, and ATG8 family members and recognizes specific autophagy targets, thus coordinating target recognition with assembly of the autophagic apparatus and initiation of autophagy. Acts as an autophagy receptor for the degradation of several inflammasome components, including CASP1, NLRP1 and NLRP3, hence preventing excessive IL1B- and IL18-mediated inflammation. However, it can also have a positive effect in the inflammatory pathway, acting as an innate immune sensor that triggers PYCARD/ASC specks formation, caspase-1 activation, and IL1B and IL18 production. Together with AIM2, also acts as a mediator of pyroptosis, necroptosis and apoptosis (PANoptosis), an integral part of host defense against pathogens, in response to bacterial infection. It is required for PSTPIP1-induced PYCARD/ASC oligomerization and inflammasome formation. Recruits PSTPIP1 to inflammasomes, and is required for PSTPIP1 oligomerization. This chain is Pyrin, found in Homo sapiens (Human).